A 639-amino-acid chain; its full sequence is Probable potassium transport system protein Kup 1 (639 aa).

Residues 1–16 are compositionally biased toward polar residues; it reads MALANTGSEAEPVEQS. A disordered region spans residues 1–21; it reads MALANTGSEAEPVEQSSHPEI. Helical transmembrane passes span 29–49, 67–87, 117–137, 154–174, 182–202, 220–240, 260–280, 302–322, 354–374, 383–403, 411–431, and 436–456; these read LMLG…IYAF, ILGV…IKYI, AVIL…AVIT, PTFQ…VFAV, VGLV…LSGL, IVAF…AIFL, IVLA…AGQG, ALIP…QAVI, IYMP…VVGF, AYGI…YVVM, LWVA…FFAS, and VFEG…GMWT.

The protein belongs to the HAK/KUP transporter (TC 2.A.72) family.

The protein localises to the cell inner membrane. It carries out the reaction K(+)(in) + H(+)(in) = K(+)(out) + H(+)(out). In terms of biological role, transport of potassium into the cell. Likely operates as a K(+):H(+) symporter. The protein is Probable potassium transport system protein Kup 1 of Mesorhizobium japonicum (strain LMG 29417 / CECT 9101 / MAFF 303099) (Mesorhizobium loti (strain MAFF 303099)).